The sequence spans 165 residues: Large ribosomal subunit protein uL10 (165 aa).

The protein belongs to the universal ribosomal protein uL10 family. In terms of assembly, part of the ribosomal stalk of the 50S ribosomal subunit. The N-terminus interacts with L11 and the large rRNA to form the base of the stalk. The C-terminus forms an elongated spine to which L12 dimers bind in a sequential fashion forming a multimeric L10(L12)X complex.

Forms part of the ribosomal stalk, playing a central role in the interaction of the ribosome with GTP-bound translation factors. This Burkholderia cenocepacia (strain HI2424) protein is Large ribosomal subunit protein uL10.